We begin with the raw amino-acid sequence, 387 residues long: Chaperone protein DnaJ (387 aa).

A J domain is found at D4 to G68. The interval E76 to Q135 is disordered. Over residues G80–S105 the composition is skewed to gly residues. Low complexity predominate over residues Q121–N133. Residues G148 to E230 form a CR-type zinc finger. Residues C161, C164, C178, C181, C204, C207, C218, and C221 each coordinate Zn(2+). CXXCXGXG motif repeat units follow at residues C161–G168, C178–G185, C204–G211, and C218–G225.

It belongs to the DnaJ family. As to quaternary structure, homodimer. It depends on Zn(2+) as a cofactor.

It is found in the cytoplasm. Its function is as follows. Participates actively in the response to hyperosmotic and heat shock by preventing the aggregation of stress-denatured proteins and by disaggregating proteins, also in an autonomous, DnaK-independent fashion. Unfolded proteins bind initially to DnaJ; upon interaction with the DnaJ-bound protein, DnaK hydrolyzes its bound ATP, resulting in the formation of a stable complex. GrpE releases ADP from DnaK; ATP binding to DnaK triggers the release of the substrate protein, thus completing the reaction cycle. Several rounds of ATP-dependent interactions between DnaJ, DnaK and GrpE are required for fully efficient folding. Also involved, together with DnaK and GrpE, in the DNA replication of plasmids through activation of initiation proteins. This is Chaperone protein DnaJ from Haloquadratum walsbyi (strain DSM 16790 / HBSQ001).